The primary structure comprises 484 residues: Cobyric acid synthase (484 aa).

The region spanning 251 to 438 (ALKIAVPVLP…LHGLFASDAY (188 aa)) is the GATase cobBQ-type domain. The active-site Nucleophile is the Cys-333. The active site involves His-430.

The protein belongs to the CobB/CobQ family. CobQ subfamily.

The protein operates within cofactor biosynthesis; adenosylcobalamin biosynthesis. Functionally, catalyzes amidations at positions B, D, E, and G on adenosylcobyrinic A,C-diamide. NH(2) groups are provided by glutamine, and one molecule of ATP is hydrogenolyzed for each amidation. This Rhizobium etli (strain CIAT 652) protein is Cobyric acid synthase.